The primary structure comprises 931 residues: Beta-mannosidase A (931 aa).

Residues 1–21 form the signal peptide; sequence MRHSIGLAAALLAPTLPVALG. Asn40, Asn79, Asn247, Asn282, and Asn347 each carry an N-linked (GlcNAc...) asparagine glycan. Glu479 functions as the Proton donor in the catalytic mechanism. 8 N-linked (GlcNAc...) asparagine glycosylation sites follow: Asn550, Asn608, Asn658, Asn738, Asn790, Asn798, Asn830, and Asn918.

The protein belongs to the glycosyl hydrolase 2 family. Beta-mannosidase A subfamily. As to quaternary structure, homodimer. In terms of processing, N-glycosylated.

It localises to the secreted. The enzyme catalyses Hydrolysis of terminal, non-reducing beta-D-mannose residues in beta-D-mannosides.. The protein operates within glycan metabolism; N-glycan degradation. Functionally, exoglycosidase that cleaves the single beta-linked mannose residue from the non-reducing end of beta-mannosidic oligosaccharides of various complexity and length. Involved in the degradation of polymeric mannan and galactomannan. Releases the terminal mannose residue from mannobiose and mannotriose, as well as from galactosyl-mannobiose (GM2), galactosyl-mannotriose (GM3) and di-galactosyl-mannopentaose (G2M5). The protein is Beta-mannosidase A (mndA) of Aspergillus niger.